The sequence spans 91 residues: Small ribosomal subunit protein uS19 (91 aa).

This sequence belongs to the universal ribosomal protein uS19 family.

Functionally, protein S19 forms a complex with S13 that binds strongly to the 16S ribosomal RNA. The sequence is that of Small ribosomal subunit protein uS19 from Janthinobacterium sp. (strain Marseille) (Minibacterium massiliensis).